Here is a 163-residue protein sequence, read N- to C-terminus: Photosystem II extrinsic protein V (163 aa).

An N-terminal signal peptide occupies residues 1-26 (MFKKSSQLFSLVFFTIFSIFIGTASA). The heme c site is built by C63, C66, H67, and M130.

It belongs to the cytochrome c family. PsbV subfamily. As to quaternary structure, PSII is composed of 1 copy each of membrane proteins PsbA, PsbB, PsbC, PsbD, PsbE, PsbF, PsbH, PsbI, PsbJ, PsbK, PsbL, PsbM, PsbT, PsbY, PsbZ, Psb30/Ycf12, at least 3 peripheral proteins of the oxygen-evolving complex and a large number of cofactors. It forms dimeric complexes. It depends on heme c as a cofactor.

Its subcellular location is the plastid. It is found in the chloroplast thylakoid membrane. One of the extrinsic, lumenal subunits of photosystem II (PSII). PSII is a light-driven water plastoquinone oxidoreductase, using light energy to abstract electrons from H(2)O, generating a proton gradient subsequently used for ATP formation. The extrinsic proteins stabilize the structure of photosystem II oxygen-evolving complex (OEC), the ion environment of oxygen evolution and protect the OEC against heat-induced inactivation. The sequence is that of Photosystem II extrinsic protein V from Phaeodactylum tricornutum (strain CCAP 1055/1).